We begin with the raw amino-acid sequence, 325 residues long: GMP reductase (325 aa).

The active-site Thioimidate intermediate is C173. An NADP(+)-binding site is contributed by 202-225; the sequence is IIADGGIHEHGDIAKSIRFGATMV.

It belongs to the IMPDH/GMPR family. GuaC type 2 subfamily.

The enzyme catalyses IMP + NH4(+) + NADP(+) = GMP + NADPH + 2 H(+). Catalyzes the irreversible NADPH-dependent deamination of GMP to IMP. It functions in the conversion of nucleobase, nucleoside and nucleotide derivatives of G to A nucleotides, and in maintaining the intracellular balance of A and G nucleotides. This Albidiferax ferrireducens (strain ATCC BAA-621 / DSM 15236 / T118) (Rhodoferax ferrireducens) protein is GMP reductase.